Consider the following 262-residue polypeptide: MAHLLEKTRKITSILKRSEEQLQDELPYNAITRQLADIIHCNACIINSKGRLLGYFMRYKTNTDRVEQFFQTKIFPDDYVQGANMIYETEANLPVEHDMSIFPVESRDDFPDGLTTIAPIHVSGIRLGSLIIWRNDKKFEDEDLVLVEIASTVVGIQLLNFQREEDEKNIRRRTAVTMAVNTLSYSELRAVSAILGELNGNEGKLTASVIADRIGITRSVIVNALRKLESAGIIESRSLGMKGTYLKVLISDIFEEVKKRDY.

The GAF domain stretch occupies residues 1 to 159; sequence MAHLLEKTRK…ASTVVGIQLL (159 aa). Residues 207–226 constitute a DNA-binding region (H-T-H motif); the sequence is ASVIADRIGITRSVIVNALR.

The protein belongs to the CodY family.

Its subcellular location is the cytoplasm. DNA-binding global transcriptional regulator which is involved in the adaptive response to starvation and acts by directly or indirectly controlling the expression of numerous genes in response to nutrient availability. During rapid exponential growth, CodY is highly active and represses genes whose products allow adaptation to nutrient depletion. The polypeptide is Global transcriptional regulator CodY (Streptococcus pneumoniae (strain JJA)).